The sequence spans 694 residues: Elongation factor G (694 aa).

Residues 12 to 286 enclose the tr-type G domain; it reads SKLRNIGIMA…AVVDYLPSPI (275 aa). Residues 21 to 28, 85 to 89, and 139 to 142 contribute to the GTP site; these read AHIDAGKT, DTPGH, and NKMD.

This sequence belongs to the TRAFAC class translation factor GTPase superfamily. Classic translation factor GTPase family. EF-G/EF-2 subfamily.

It localises to the cytoplasm. In terms of biological role, catalyzes the GTP-dependent ribosomal translocation step during translation elongation. During this step, the ribosome changes from the pre-translocational (PRE) to the post-translocational (POST) state as the newly formed A-site-bound peptidyl-tRNA and P-site-bound deacylated tRNA move to the P and E sites, respectively. Catalyzes the coordinated movement of the two tRNA molecules, the mRNA and conformational changes in the ribosome. The polypeptide is Elongation factor G (Pseudothermotoga lettingae (strain ATCC BAA-301 / DSM 14385 / NBRC 107922 / TMO) (Thermotoga lettingae)).